Here is a 57-residue protein sequence, read N- to C-terminus: uncharacterized protein (57 aa).

The N-terminal stretch at 1-22 is a signal peptide; that stretch reads MNEIIITIIVLILLLFITLSRN. A coiled-coil region spans residues 26–57; it reads NNQSNNGKKEKLIKCKKEVQQLRQKLDQLTFQ.

This is an uncharacterized protein from Acheta domesticus (House cricket).